The primary structure comprises 301 residues: Ribonuclease HIII (301 aa).

The RNase H type-2 domain occupies 90 to 301 (TPHIGIDESG…LDAILGKVGK (212 aa)). Residues aspartate 96, glutamate 97, and aspartate 198 each contribute to the a divalent metal cation site.

This sequence belongs to the RNase HII family. RnhC subfamily. It depends on Mn(2+) as a cofactor. Requires Mg(2+) as cofactor.

Its subcellular location is the cytoplasm. The catalysed reaction is Endonucleolytic cleavage to 5'-phosphomonoester.. In terms of biological role, endonuclease that specifically degrades the RNA of RNA-DNA hybrids. The sequence is that of Ribonuclease HIII from Protochlamydia amoebophila (strain UWE25).